Consider the following 235-residue polypeptide: Enolase-phosphatase E1 (235 aa).

Belongs to the HAD-like hydrolase superfamily. MasA/MtnC family. In terms of assembly, monomer. Mg(2+) serves as cofactor.

It carries out the reaction 5-methylsulfanyl-2,3-dioxopentyl phosphate + H2O = 1,2-dihydroxy-5-(methylsulfanyl)pent-1-en-3-one + phosphate. It participates in amino-acid biosynthesis; L-methionine biosynthesis via salvage pathway; L-methionine from S-methyl-5-thio-alpha-D-ribose 1-phosphate: step 3/6. Its pathway is amino-acid biosynthesis; L-methionine biosynthesis via salvage pathway; L-methionine from S-methyl-5-thio-alpha-D-ribose 1-phosphate: step 4/6. Bifunctional enzyme that catalyzes the enolization of 2,3-diketo-5-methylthiopentyl-1-phosphate (DK-MTP-1-P) into the intermediate 2-hydroxy-3-keto-5-methylthiopentenyl-1-phosphate (HK-MTPenyl-1-P), which is then dephosphorylated to form the acireductone 1,2-dihydroxy-3-keto-5-methylthiopentene (DHK-MTPene). This Parvibaculum lavamentivorans (strain DS-1 / DSM 13023 / NCIMB 13966) protein is Enolase-phosphatase E1.